The primary structure comprises 482 residues: MQKPIKKDPNRYHGEKMTEFSEWFHNILEEAEIIDQRYPVKGMHVWMPHGFMIRKNTLKILRRILDRDHEEVLFPLLVPEDELAKEAIHVKGFEDEVYWVTHGGLSKLQRKLALRPTSETVMYPMFALWVRSHTDLPMRFYQVVNTFRYETKHTRPLIRVREITTFKEAHTIHATASEAEEQVERAVEIYKEFFNSLGIPYLITRRPPWDKFPGSEYTVAFDTLMPDGKTLQIGTVHNLGQTFARTFEIKFETPEGDHEYVHQTCYGLSDRVIASVIAIHGDESGLCLPPDVAAHQVVIVPIIFKKAAEEVMEACRELRSRLEAAGFRVHLDDRDIRAGRKYYEWEMRGVPLRVEIGPRDLEKGAAVISRRDTGEKVTADLQGIEETLRELMKDILENLRTRAWERMESEIREAETLEEASRIVDEKRGIISFMWCGEEECGMDVEEKVRVDILGIQEEGSGTCINCGREAPTGLTLPEHIS.

Residues Thr117, Glu119, and Arg148 each contribute to the L-proline site. Arg148, Glu150, Gln232, and Thr235 together coordinate ATP. L-proline is bound at residue His237. Ser269 is an ATP binding site. An interaction with tRNA region spans residues 346–376; that stretch reads EMRGVPLRVEIGPRDLEKGAAVISRRDTGEK. Residues Cys436, Cys441, Cys464, and Cys467 each contribute to the Zn(2+) site.

This sequence belongs to the class-II aminoacyl-tRNA synthetase family. ProS type 3 subfamily. Homodimer. The dimer is functionally asymmetric: only one of the two active sites at a time is able to form prolyl-adenylate, and only one tRNA molecule binds per dimer. Interacts with LeuRS, which enhances tRNA(Pro) aminoacylation.

It localises to the cytoplasm. The catalysed reaction is tRNA(Pro) + L-proline + ATP = L-prolyl-tRNA(Pro) + AMP + diphosphate. Functionally, catalyzes the attachment of proline to tRNA(Pro) in a two-step reaction: proline is first activated by ATP to form Pro-AMP and then transferred to the acceptor end of tRNA(Pro). Can inadvertently accommodate and process cysteine. This chain is Proline--tRNA ligase (proS), found in Methanothermobacter thermautotrophicus (strain ATCC 29096 / DSM 1053 / JCM 10044 / NBRC 100330 / Delta H) (Methanobacterium thermoautotrophicum).